Reading from the N-terminus, the 943-residue chain is Receptor-like kinase TMK3 (943 aa).

The signal sequence occupies residues 1 to 24 (MSNSHLGTLCFIISLLGLANFSLS). Residues 25–482 (QTGLDDSTMQ…ETSKKSSNVK (458 aa)) are Extracellular-facing. A glycan (N-linked (GlcNAc...) asparagine) is linked at N41. A disulfide bond links C54 and C61. LRR repeat units follow at residues 64 to 88 (SNRVTKIQLKQKGIRGTLPTNLQSL), 89 to 111 (SELVILELFLNRISGPIPDLSGL), 112 to 134 (SRLQTLNLHDNLFTSVPKNLFSG), 136 to 160 (SSLQEMYLENNPFDPWVIPDTVKEA), 162 to 183 (SLQNLTLSNCSIIGKIPDFFGS), 186 to 210 (LPSLTNLKLSQNGLEGELPMSFAGT), 212 to 232 (IQSLFLNGQKLNGSISVLGNM), 233 to 254 (TSLVEVSLQGNQFSGPIPDLSG), 255 to 279 (LVSLRVFNVRENQLTGVVPQSLVSL), and 281 to 301 (SLTTVNLTNNYLQGPTPLFGK). Residues N165 and N170 are each glycosylated (N-linked (GlcNAc...) asparagine). N-linked (GlcNAc...) asparagine glycans are attached at residues N223 and N231. An N-linked (GlcNAc...) asparagine glycan is attached at N286. 2 cysteine pairs are disulfide-bonded: C315–C323 and C353–C361. LRR repeat units follow at residues 363-386 (GGNITVVNMRKQDLSGTISPSLAK), 387-410 (LTSLETINLADNKLSGHIPDELTT), and 411-438 (LSKLRLLDVSNNDFYGIPPKFRDTVTLV). The N-linked (GlcNAc...) asparagine glycan is linked to N365. The interval 441–476 (GNANMGKNGPNKTSDAPGASPGSKPSGGSDGSETSK) is disordered. A glycan (N-linked (GlcNAc...) asparagine) is linked at N451. Low complexity predominate over residues 454–467 (SDAPGASPGSKPSG). A helical membrane pass occupies residues 483–503 (IIVPVVGGVVGALCLVGLGVC). Residues 504 to 943 (LYAKKRKRPA…ADSFTSVDGR (440 aa)) lie on the Cytoplasmic side of the membrane. Residues 514-534 (RVQSPSSNMVIHPHHSGDNDD) are disordered. A Protein kinase domain is found at 585–866 (FSEENILGRG…AHIVNVLSSL (282 aa)). Residues 591–599 (LGRGGFGTV) and K613 each bind ATP. D714 functions as the Proton acceptor in the catalytic mechanism. Residues 904–943 (QTADDSGSSSSAYGSKDNTQTSIPTRPSGFADSFTSVDGR) are disordered. Residues 906 to 918 (ADDSGSSSSAYGS) are compositionally biased toward low complexity. Positions 919 to 928 (KDNTQTSIPT) are enriched in polar residues.

The protein belongs to the protein kinase superfamily. Ser/Thr protein kinase family. Expressed in roots, leaves, stems, siliques and flowers.

The protein localises to the membrane. The enzyme catalyses L-seryl-[protein] + ATP = O-phospho-L-seryl-[protein] + ADP + H(+). It carries out the reaction L-threonyl-[protein] + ATP = O-phospho-L-threonyl-[protein] + ADP + H(+). In terms of biological role, involved in auxin signal transduction and cell expansion and proliferation regulation. The protein is Receptor-like kinase TMK3 of Arabidopsis thaliana (Mouse-ear cress).